Reading from the N-terminus, the 225-residue chain is RNA chaperone ProQ (225 aa).

The tract at residues 103–173 (LEEAKARVQT…APREERHTPV (71 aa)) is disordered. Over residues 109-118 (RVQTQRAAQQ) the composition is skewed to low complexity. Residues 137-146 (RERKPRPQQP) show a composition bias toward basic residues. The segment covering 147–156 (RRKEGAEQRK) has biased composition (basic and acidic residues).

This sequence belongs to the ProQ family.

It is found in the cytoplasm. In terms of biological role, RNA chaperone with significant RNA binding, RNA strand exchange and RNA duplexing activities. May regulate ProP activity through an RNA-based, post-transcriptional mechanism. The protein is RNA chaperone ProQ of Klebsiella pneumoniae (strain 342).